Here is a 180-residue protein sequence, read N- to C-terminus: Nucleoside triphosphate/diphosphate phosphatase (180 aa).

The active-site Proton donor is arginine 26. Mg(2+)-binding residues include asparagine 90, aspartate 106, aspartate 108, aspartate 110, aspartate 123, and glutamate 126.

Belongs to the Ntdp family. Mg(2+) serves as cofactor.

The enzyme catalyses a ribonucleoside 5'-triphosphate + H2O = a ribonucleoside 5'-diphosphate + phosphate + H(+). It carries out the reaction a ribonucleoside 5'-diphosphate + H2O = a ribonucleoside 5'-phosphate + phosphate + H(+). Its function is as follows. Has nucleoside phosphatase activity towards nucleoside triphosphates and nucleoside diphosphates. This Staphylococcus aureus (strain Mu3 / ATCC 700698) protein is Nucleoside triphosphate/diphosphate phosphatase.